The following is a 424-amino-acid chain: Alkaline nuclease (424 aa).

The protein belongs to the baculo-herpesviridae alkaline nuclease family. In terms of assembly, interacts with LEF-3.

The protein resides in the host nucleus. Its function is as follows. May play a role in maturation and encapsidation of viral replicated genome, by promoting DNA homologous recombination. Exhibits endonuclease and 5'-&gt;3' exonuclease activities. The endonuclease activity displays a specificity for ssDNA in vitro. The polypeptide is Alkaline nuclease (ALK-EXO) (Orgyia pseudotsugata (Douglas-fir tussock moth)).